The chain runs to 414 residues: ZP domain-containing protein (414 aa).

Positions 1 to 17 are cleaved as a signal peptide; that stretch reads MFLYSFVFLMLLGLSSA. The interval 18 to 65 is disordered; that stretch reads QTESATSPDEVETEPTMSTDQPETSPSMSTETEPTTETPPVTTPPPPD. At 18–364 the chain is on the extracellular side; the sequence is QTESATSPDE…GAQEAVSSLT (347 aa). The span at 39-57 shows a compositional bias: low complexity; it reads PETSPSMSTETEPTTETPP. In terms of domain architecture, ZP spans 70–323; it reads ICTNEKMEVF…SRCAKGCETS (254 aa). Cys241 and Cys302 form a disulfide bridge. A helical membrane pass occupies residues 365–385; the sequence is IFAAVAGVLGVIVLFLAVALV. The Cytoplasmic portion of the chain corresponds to 386–414; sequence MLYKRYRSPQSATRVVYTKTANEEGKLLV.

Component of the acid-insoluble and acid-soluble organic matrix of the aragonitic skeleton (at protein level).

It localises to the membrane. This chain is ZP domain-containing protein, found in Acropora millepora (Staghorn coral).